The following is a 277-amino-acid chain: Thiazole synthase (277 aa).

Residue Lys-118 is the Schiff-base intermediate with DXP of the active site. Residues Gly-179, 205-206 (AG), and 227-228 (NT) contribute to the 1-deoxy-D-xylulose 5-phosphate site.

It belongs to the ThiG family. Homotetramer. Forms heterodimers with either ThiH or ThiS.

Its subcellular location is the plastid. It is found in the chloroplast. The catalysed reaction is [ThiS sulfur-carrier protein]-C-terminal-Gly-aminoethanethioate + 2-iminoacetate + 1-deoxy-D-xylulose 5-phosphate = [ThiS sulfur-carrier protein]-C-terminal Gly-Gly + 2-[(2R,5Z)-2-carboxy-4-methylthiazol-5(2H)-ylidene]ethyl phosphate + 2 H2O + H(+). Its pathway is cofactor biosynthesis; thiamine diphosphate biosynthesis. Catalyzes the rearrangement of 1-deoxy-D-xylulose 5-phosphate (DXP) to produce the thiazole phosphate moiety of thiamine. Sulfur is provided by the thiocarboxylate moiety of the carrier protein ThiS. In vitro, sulfur can be provided by H(2)S. The protein is Thiazole synthase of Emiliania huxleyi (Coccolithophore).